A 367-amino-acid polypeptide reads, in one-letter code: Cell-death-related nuclease 7 (367 aa).

A signal peptide spans 1–18 (MRLYFVLIFSVIFTTGNG). Asparagine 253 carries an N-linked (GlcNAc...) asparagine glycan.

It belongs to the DNase II family.

The chain is Cell-death-related nuclease 7 (crn-7) from Caenorhabditis elegans.